The primary structure comprises 95 residues: Aspartyl/glutamyl-tRNA(Asn/Gln) amidotransferase subunit C (95 aa).

This sequence belongs to the GatC family. As to quaternary structure, heterotrimer of A, B and C subunits.

It catalyses the reaction L-glutamyl-tRNA(Gln) + L-glutamine + ATP + H2O = L-glutaminyl-tRNA(Gln) + L-glutamate + ADP + phosphate + H(+). The enzyme catalyses L-aspartyl-tRNA(Asn) + L-glutamine + ATP + H2O = L-asparaginyl-tRNA(Asn) + L-glutamate + ADP + phosphate + 2 H(+). Allows the formation of correctly charged Asn-tRNA(Asn) or Gln-tRNA(Gln) through the transamidation of misacylated Asp-tRNA(Asn) or Glu-tRNA(Gln) in organisms which lack either or both of asparaginyl-tRNA or glutaminyl-tRNA synthetases. The reaction takes place in the presence of glutamine and ATP through an activated phospho-Asp-tRNA(Asn) or phospho-Glu-tRNA(Gln). The sequence is that of Aspartyl/glutamyl-tRNA(Asn/Gln) amidotransferase subunit C from Chromobacterium violaceum (strain ATCC 12472 / DSM 30191 / JCM 1249 / CCUG 213 / NBRC 12614 / NCIMB 9131 / NCTC 9757 / MK).